A 3640-amino-acid polypeptide reads, in one-letter code: Serine/threonine-protein kinase SMG1 (3640 aa).

A compositionally biased stretch (polar residues) spans 21-34 (NDWQPRSDSLSASQ). The disordered stretch occupies residues 21 to 41 (NDWQPRSDSLSASQDGVKCSV). The FAT domain occupies 1495–1843 (YCHSGKCELA…LYPAIVGSIS (349 aa)). One copy of the HEAT repeat lies at 1794 to 1829 (APWRGIIPQLFSRLNHPEAYIRQSICSLLCRVAQDS). A disordered region spans residues 1870 to 1890 (GLCGGESETGSGPTSQESSRG). Over residues 1874–1887 (GESETGSGPTSQES) the composition is skewed to low complexity. Residues 2102–2441 (VGNTITILPT…MERDITRSLF (340 aa)) form the PI3K/PI4K catalytic domain. A G-loop region spans residues 2108 to 2114 (ILPTKTK). Positions 2310–2318 (GLGDRHLDN) are catalytic loop. An activation loop region spans residues 2330 to 2354 (HIDYNVCFEKGKSLRVPEKVPFRMT). Positions 3608-3640 (RRMSVTEQVDYVIKEATNVDNLAQLYEGWTAWV) constitute an FATC domain.

The protein belongs to the PI3/PI4-kinase family. Requires Mn(2+) as cofactor. Post-translationally, autophosphorylated.

It localises to the nucleus. The protein resides in the cytoplasm. The catalysed reaction is L-seryl-[protein] + ATP = O-phospho-L-seryl-[protein] + ADP + H(+). It carries out the reaction L-threonyl-[protein] + ATP = O-phospho-L-threonyl-[protein] + ADP + H(+). Functionally, serine/threonine protein kinase involved in both mRNA surveillance and genotoxic stress response pathways. Recognizes the substrate consensus sequence [ST]-Q. Plays a central role in nonsense-mediated decay (NMD) of mRNAs containing premature stop codons by phosphorylating UPF1/RENT1. The polypeptide is Serine/threonine-protein kinase SMG1 (Danio rerio (Zebrafish)).